Consider the following 560-residue polypeptide: Glycolate permease GlcA (560 aa).

Residues 1–13 (MVTWTQMYMPMGG) are Cytoplasmic-facing. A helical membrane pass occupies residues 14–34 (LGLSALVALIPIIFFFVALAV). The Periplasmic segment spans residues 35 to 41 (LRLKGHV). The helical transmembrane segment at 42–62 (AGAITLILSILIAIFAFKMPI) threads the bilayer. The Cytoplasmic segment spans residues 63–69 (DMAFAAA). The helical transmembrane segment at 70–90 (GYGFIYGLWPIAWIIVAAVFL) threads the bilayer. Topologically, residues 91-130 (YKLTVASGQFDIIRSSVISITDDQRLQVLLIGFSFGALLE) are periplasmic. The helical transmembrane segment at 131 to 151 (GAAGFGAPVAITGALLVGLGF) threads the bilayer. Over 152-158 (KPLYAAG) the chain is Cytoplasmic. A helical membrane pass occupies residues 159-179 (LCLIANTAPVAFGALGVPILV). Topologically, residues 180-199 (AGQVTGIDPFHIGAMAGRQL) are periplasmic. The helical transmembrane segment at 200–220 (PFLSVLVPFWLVAMMDGWKGV) threads the bilayer. Topologically, residues 221–225 (KETWP) are cytoplasmic. The chain crosses the membrane as a helical span at residues 226 to 246 (AALVAGGSFAVTQFFTSNYIG). Residues 247–248 (PE) lie on the Periplasmic side of the membrane. A helical membrane pass occupies residues 249–269 (LPDITSALVSIVSLALFLKVW). Over 270–313 (RPKNTETAISMGQSAGAMVVNKPSSGGPVPSEYSLGQIIRAWSP) the chain is Cytoplasmic. Residues 314–334 (FLILTVLVTIWTMKPFKALFA) form a helical membrane-spanning segment. Residues 335–378 (PGGAFYSLVINFQIPHLHQQVLKAAPIVAQPTPMDAVFKFDPLS) are Periplasmic-facing. The chain crosses the membrane as a helical span at residues 379–399 (AGGTAIFIAAIISIFILGVGI). The Cytoplasmic segment spans residues 400–408 (KKGIGVFAE). The chain crosses the membrane as a helical span at residues 409 to 429 (TLISLKWPILSIGMVLAFAFV). The Periplasmic portion of the chain corresponds to 430 to 438 (TNYSGMSTT). A helical transmembrane segment spans residues 439 to 459 (LALVLAGTGVMFPFFSPFLGW). Residues 460–536 (LGVFLTGSDT…ELFRYTVKHS (77 aa)) lie on the Cytoplasmic side of the membrane. The chain crosses the membrane as a helical span at residues 537-557 (LIFASVIGIITLLQAYVFTGM). The Periplasmic portion of the chain corresponds to 558 to 560 (LVS).

The protein belongs to the lactate permease family.

It is found in the cell inner membrane. It catalyses the reaction glycolate(in) + H(+)(in) = glycolate(out) + H(+)(out). It carries out the reaction (S)-lactate(in) + H(+)(in) = (S)-lactate(out) + H(+)(out). The catalysed reaction is (R)-lactate(in) + H(+)(in) = (R)-lactate(out) + H(+)(out). With respect to regulation, inhibited by the proton ionophore carbonyl cyanide m-chlorophenylhydrazone (CCCP). Its function is as follows. Uptake of glycolate across the membrane. Can also transport L-lactate and D-lactate. Seems to be driven by a proton motive force. This is Glycolate permease GlcA from Escherichia coli (strain K12).